The sequence spans 71 residues: MLFETLKSLSQQNGGQFSDEQSFESPISSSFNGHSMPFGSPSSTMSSSYKGNTNSSTKSSSAFFSRPFYSE.

The tract at residues 1-71 (MLFETLKSLS…AFFSRPFYSE (71 aa)) is disordered. Residues 7–33 (KSLSQQNGGQFSDEQSFESPISSSFNG) show a composition bias toward polar residues. Over residues 35–65 (SMPFGSPSSTMSSSYKGNTNSSTKSSSAFFS) the composition is skewed to low complexity.

This is an uncharacterized protein from Dictyostelium discoideum (Social amoeba).